A 407-amino-acid polypeptide reads, in one-letter code: Na(+)-translocating NADH-quinone reductase subunit F (407 aa).

The helical transmembrane segment at 3–23 (IILGVVMFTLIVLALVLVILF) threads the bilayer. In terms of domain architecture, 2Fe-2S ferredoxin-type spans 32–126 (GDITISVNDD…DMDIELPEEI (95 aa)). The [2Fe-2S] cluster site is built by cysteine 69, cysteine 75, cysteine 78, and cysteine 110. The 141-residue stretch at 129–269 (VKKWECTVIS…SGPFGEFFAK (141 aa)) folds into the FAD-binding FR-type domain. A catalytic region spans residues 272-389 (DAEMVFVGGG…PMMNAAVIGM (118 aa)).

It belongs to the NqrF family. In terms of assembly, composed of six subunits; NqrA, NqrB, NqrC, NqrD, NqrE and NqrF. [2Fe-2S] cluster serves as cofactor. FAD is required as a cofactor.

It localises to the cell inner membrane. The catalysed reaction is a ubiquinone + n Na(+)(in) + NADH + H(+) = a ubiquinol + n Na(+)(out) + NAD(+). Its function is as follows. NQR complex catalyzes the reduction of ubiquinone-1 to ubiquinol by two successive reactions, coupled with the transport of Na(+) ions from the cytoplasm to the periplasm. The first step is catalyzed by NqrF, which accepts electrons from NADH and reduces ubiquinone-1 to ubisemiquinone by a one-electron transfer pathway. The polypeptide is Na(+)-translocating NADH-quinone reductase subunit F (Vibrio campbellii (strain ATCC BAA-1116)).